We begin with the raw amino-acid sequence, 61 residues long: Large ribosomal subunit protein uL30 (61 aa).

It belongs to the universal ribosomal protein uL30 family. Part of the 50S ribosomal subunit.

This is Large ribosomal subunit protein uL30 from Bordetella avium (strain 197N).